The sequence spans 414 residues: Tryptophan synthase beta chain (414 aa).

N6-(pyridoxal phosphate)lysine is present on lysine 109.

Belongs to the TrpB family. Tetramer of two alpha and two beta chains. Requires pyridoxal 5'-phosphate as cofactor.

It carries out the reaction (1S,2R)-1-C-(indol-3-yl)glycerol 3-phosphate + L-serine = D-glyceraldehyde 3-phosphate + L-tryptophan + H2O. It participates in amino-acid biosynthesis; L-tryptophan biosynthesis; L-tryptophan from chorismate: step 5/5. The beta subunit is responsible for the synthesis of L-tryptophan from indole and L-serine. This Prochlorococcus marinus (strain AS9601) protein is Tryptophan synthase beta chain.